The primary structure comprises 935 residues: C-1-tetrahydrofolate synthase, cytoplasmic (935 aa).

N-acetylmethionine is present on Met-1. Residues 2–291 (APAGILNGKV…MLMQSTVESA (290 aa)) form a methylenetetrahydrofolate dehydrogenase and methenyltetrahydrofolate cyclohydrolase (D/C) domain region. Substrate-binding positions include 52–56 (YINVK) and 99–101 (VQL). The active site involves Lys-56. NADP(+) contacts are provided by residues 172–174 (GRS) and Ser-197. 272 to 276 (PGGVG) is a substrate binding site. The interval 310-935 (LNLKTPVPSD…PETEQVNGLF (626 aa)) is formyltetrahydrofolate synthetase domain. A Phosphoserine modification is found at Ser-318. 380-387 (TPLGEGKS) provides a ligand contact to ATP. Phosphoserine is present on residues Ser-413 and Ser-490.

The protein in the N-terminal section; belongs to the tetrahydrofolate dehydrogenase/cyclohydrolase family. It in the C-terminal section; belongs to the formate--tetrahydrofolate ligase family. In terms of assembly, homodimer.

The protein localises to the cytoplasm. It catalyses the reaction (6R)-5,10-methylene-5,6,7,8-tetrahydrofolate + NADP(+) = (6R)-5,10-methenyltetrahydrofolate + NADPH. The enzyme catalyses (6R)-5,10-methenyltetrahydrofolate + H2O = (6R)-10-formyltetrahydrofolate + H(+). The catalysed reaction is (6S)-5,6,7,8-tetrahydrofolate + formate + ATP = (6R)-10-formyltetrahydrofolate + ADP + phosphate. It participates in one-carbon metabolism; tetrahydrofolate interconversion. Trifunctional enzyme that catalyzes the interconversion of three forms of one-carbon-substituted tetrahydrofolate: (6R)-5,10-methylene-5,6,7,8-tetrahydrofolate, 5,10-methenyltetrahydrofolate and (6S)-10-formyltetrahydrofolate. These derivatives of tetrahydrofolate are differentially required in nucleotide and amino acid biosynthesis, (6S)-10-formyltetrahydrofolate being required for purine biosynthesis while (6R)-5,10-methylene-5,6,7,8-tetrahydrofolate is used for serine and methionine biosynthesis for instance. The sequence is that of C-1-tetrahydrofolate synthase, cytoplasmic (Mthfd1) from Rattus norvegicus (Rat).